A 651-amino-acid chain; its full sequence is Probable potassium transport system protein Kup (651 aa).

The segment covering Met-1 to Asp-16 has biased composition (basic and acidic residues). The interval Met-1 to Ser-31 is disordered. 12 helical membrane passes run Phe-38–Leu-58, Val-74–Val-94, Leu-129–Thr-149, Leu-168–Ser-188, Ala-197–Ile-217, Ala-232–Leu-252, Trp-276–Leu-296, Leu-309–Ala-329, Ile-366–Phe-386, Tyr-396–Trp-416, Pro-423–Ala-443, and Leu-448–Thr-468.

Belongs to the HAK/KUP transporter (TC 2.A.72) family.

The protein resides in the cell inner membrane. The catalysed reaction is K(+)(in) + H(+)(in) = K(+)(out) + H(+)(out). Its function is as follows. Transport of potassium into the cell. Likely operates as a K(+):H(+) symporter. This Nitrobacter winogradskyi (strain ATCC 25391 / DSM 10237 / CIP 104748 / NCIMB 11846 / Nb-255) protein is Probable potassium transport system protein Kup.